We begin with the raw amino-acid sequence, 216 residues long: Large ribosomal subunit protein uL3 (216 aa).

At Q153 the chain carries N5-methylglutamine.

Belongs to the universal ribosomal protein uL3 family. Part of the 50S ribosomal subunit. Forms a cluster with proteins L14 and L19. Post-translationally, methylated by PrmB.

Its function is as follows. One of the primary rRNA binding proteins, it binds directly near the 3'-end of the 23S rRNA, where it nucleates assembly of the 50S subunit. The sequence is that of Large ribosomal subunit protein uL3 from Burkholderia multivorans (strain ATCC 17616 / 249).